A 688-amino-acid polypeptide reads, in one-letter code: Translation initiation factor IF-2 (688 aa).

Residues 62-103 (EFEVEEKVVRSKKNSNKKKKKGKGNEDKRQDNFAGRQQTQIV) are disordered. Positions 71–83 (RSKKNSNKKKKKG) are enriched in basic residues. The 170-residue stretch at 190-359 (ERPAVVTIMG…LLVSEVEEYK (170 aa)) folds into the tr-type G domain. Positions 199 to 206 (GHVDHGKT) are G1. 199–206 (GHVDHGKT) lines the GTP pocket. A G2 region spans residues 224 to 228 (GITQH). The tract at residues 245-248 (DTPG) is G3. Residues 245–249 (DTPGH) and 299–302 (NKMD) each bind GTP. The segment at 299–302 (NKMD) is G4. Positions 335-337 (SAI) are G5.

Belongs to the TRAFAC class translation factor GTPase superfamily. Classic translation factor GTPase family. IF-2 subfamily.

The protein localises to the cytoplasm. One of the essential components for the initiation of protein synthesis. Protects formylmethionyl-tRNA from spontaneous hydrolysis and promotes its binding to the 30S ribosomal subunits. Also involved in the hydrolysis of GTP during the formation of the 70S ribosomal complex. The sequence is that of Translation initiation factor IF-2 from Bacillus cereus (strain G9842).